Consider the following 182-residue polypeptide: Nucleoside triphosphate/diphosphate phosphatase (182 aa).

Arginine 27 serves as the catalytic Proton donor. Mg(2+) is bound by residues asparagine 91, aspartate 107, aspartate 109, aspartate 111, aspartate 124, and glutamate 127.

It belongs to the Ntdp family. Requires Mg(2+) as cofactor.

It carries out the reaction a ribonucleoside 5'-triphosphate + H2O = a ribonucleoside 5'-diphosphate + phosphate + H(+). It catalyses the reaction a ribonucleoside 5'-diphosphate + H2O = a ribonucleoside 5'-phosphate + phosphate + H(+). Has nucleoside phosphatase activity towards nucleoside triphosphates and nucleoside diphosphates. The polypeptide is Nucleoside triphosphate/diphosphate phosphatase (Lactiplantibacillus plantarum (strain ATCC BAA-793 / NCIMB 8826 / WCFS1) (Lactobacillus plantarum)).